Here is a 34-residue protein sequence, read N- to C-terminus: Histone H1, sperm (34 aa).

Residues 1-34 (PASPQKRAASPRRSPKKSPRKSPKKSPRKRSASP) form a disordered region. The span at 9–34 (ASPRRSPKKSPRKSPKKSPRKRSASP) shows a compositional bias: basic residues.

This sequence belongs to the histone H1/H5 family. In terms of tissue distribution, sperm.

The protein resides in the nucleus. The protein localises to the chromosome. Histones H1 are necessary for the condensation of nucleosome chains into higher-order structures. This is Histone H1, sperm from Strongylocentrotus purpuratus (Purple sea urchin).